The primary structure comprises 440 residues: MKIFFISLGCDKNLVDSEVMLGLIRDRGFELTNDESEADIIVVNTCCFIHDAKEESINTILEMAEYKKSGSLKGLIVTGCLAQRYKEDILAEIPEVDALLGTTSYDAITEVIDKVLGGERTESFKDVDYLSEVKTNRVNTTGGYYSFLKIAEGCDKHCTYCIIPKIRGDYRSVPMERLVEEAKFLSEGGVKELILIAQETTVYGVDLYGKKMLPELLRKLCAIDGIEWIRIQYCYPEEINDELIDVLKSETKICHYLDIPIQHASDDILKRMGRRTNNEELVTLITKLRKEIPDIALRTSLITGFPGETEEDHEILKEFVRKMRFERLGVFTYSKEEDTPAAKMKDQITKKVKVARQKELMEIQQGIAFERAESMVGRKLKVMIEGKLVEDGIFIGRTYMDAPNIDGYIFVHTKDELMSGEFVEVTVTEAKEYDLIGTAE.

In terms of domain architecture, MTTase N-terminal spans 1–117 (MKIFFISLGC…ITEVIDKVLG (117 aa)). [4Fe-4S] cluster is bound by residues Cys10, Cys46, Cys80, Cys154, Cys158, and Cys161. A Radical SAM core domain is found at 140–370 (TTGGYYSFLK…MEIQQGIAFE (231 aa)). Residues 373–440 (ESMVGRKLKV…KEYDLIGTAE (68 aa)) enclose the TRAM domain.

It belongs to the methylthiotransferase family. RimO subfamily. Requires [4Fe-4S] cluster as cofactor.

It localises to the cytoplasm. It catalyses the reaction L-aspartate(89)-[ribosomal protein uS12]-hydrogen + (sulfur carrier)-SH + AH2 + 2 S-adenosyl-L-methionine = 3-methylsulfanyl-L-aspartate(89)-[ribosomal protein uS12]-hydrogen + (sulfur carrier)-H + 5'-deoxyadenosine + L-methionine + A + S-adenosyl-L-homocysteine + 2 H(+). In terms of biological role, catalyzes the methylthiolation of an aspartic acid residue of ribosomal protein uS12. The sequence is that of Ribosomal protein uS12 methylthiotransferase RimO from Lachnoclostridium phytofermentans (strain ATCC 700394 / DSM 18823 / ISDg) (Clostridium phytofermentans).